The sequence spans 315 residues: Glycine--tRNA ligase alpha subunit (315 aa).

This sequence belongs to the class-II aminoacyl-tRNA synthetase family. Tetramer of two alpha and two beta subunits.

Its subcellular location is the cytoplasm. The enzyme catalyses tRNA(Gly) + glycine + ATP = glycyl-tRNA(Gly) + AMP + diphosphate. This Ectopseudomonas mendocina (strain ymp) (Pseudomonas mendocina) protein is Glycine--tRNA ligase alpha subunit.